Reading from the N-terminus, the 267-residue chain is Actin maturation protease (267 aa).

The interval 1–32 (MSNISSVAPPPPPPPMIVTPSTPATTKERPVG) is disordered. Residues 8–17 (APPPPPPPMI) show a composition bias toward pro residues. The tract at residues 74–188 (SIVQVGPTCG…WALIVGYLVD (115 aa)) is peptidase C39-like. C82 is a catalytic residue.

Belongs to the ACTMAP family.

The enzyme catalyses N-terminal N(alpha)-acetyl-L-cysteinyl-L-aspartyl-[protein] + H2O = N-terminal L-aspartyl-[protein] + N-acetyl-L-cysteine. Its function is as follows. Actin maturation protease that specifically mediates the cleavage of immature acetylated N-terminal actin, thereby contributing to actin maturation. In Drosophila melanogaster (Fruit fly), this protein is Actin maturation protease.